The primary structure comprises 493 residues: Xaa-Pro dipeptidase (493 aa).

Ala-2 carries the N-acetylalanine modification. Ser-167 is subject to Phosphoserine. His-255 is a binding site for a dipeptide. Positions 276, 287, and 370 each coordinate Mn(2+). Asp-287 serves as a coordination point for a dipeptide. A dipeptide is bound by residues His-377 and Arg-398. Mn(2+) contacts are provided by Glu-412 and Glu-452.

This sequence belongs to the peptidase M24B family. Eukaryotic-type prolidase subfamily. In terms of assembly, homodimer. Mn(2+) serves as cofactor.

The catalysed reaction is Xaa-L-Pro dipeptide + H2O = an L-alpha-amino acid + L-proline. Its function is as follows. Dipeptidase that catalyzes the hydrolysis of dipeptides with a prolyl (Xaa-Pro) or hydroxyprolyl residue in the C-terminal position. The preferred dipeptide substrate is Gly-Pro, but other Xaa-Pro dipeptides, such as Ala-Pro, Met-Pro, Phe-Pro, Val-Pro and Leu-Pro, can be cleaved. Plays an important role in collagen metabolism because the high level of iminoacids in collagen. This chain is Xaa-Pro dipeptidase (PEPD), found in Pongo abelii (Sumatran orangutan).